A 290-amino-acid polypeptide reads, in one-letter code: ATP synthase gamma chain (290 aa).

This sequence belongs to the ATPase gamma chain family. As to quaternary structure, F-type ATPases have 2 components, CF(1) - the catalytic core - and CF(0) - the membrane proton channel. CF(1) has five subunits: alpha(3), beta(3), gamma(1), delta(1), epsilon(1). CF(0) has three main subunits: a, b and c.

Its subcellular location is the cell membrane. Its function is as follows. Produces ATP from ADP in the presence of a proton gradient across the membrane. The gamma chain is believed to be important in regulating ATPase activity and the flow of protons through the CF(0) complex. In Buchnera aphidicola subsp. Schlechtendalia chinensis, this protein is ATP synthase gamma chain.